The following is a 139-amino-acid chain: Holo-[acyl-carrier-protein] synthase (139 aa).

Mg(2+) is bound by residues Asp-8 and Glu-61.

This sequence belongs to the P-Pant transferase superfamily. AcpS family. Mg(2+) is required as a cofactor.

The protein localises to the cytoplasm. The enzyme catalyses apo-[ACP] + CoA = holo-[ACP] + adenosine 3',5'-bisphosphate + H(+). Its function is as follows. Transfers the 4'-phosphopantetheine moiety from coenzyme A to a Ser of acyl-carrier-protein. The chain is Holo-[acyl-carrier-protein] synthase from Nitrobacter winogradskyi (strain ATCC 25391 / DSM 10237 / CIP 104748 / NCIMB 11846 / Nb-255).